The sequence spans 417 residues: MAEYKNYTLNFGPVHPAAHGVLRLILELDGENVVRADPHVGLLHRGTEKLAEFKPYNQSIGYMDRLDYVSMMCNEHAYVMAIEKLLQLEVPERAKYIRVMFAEMTRILNHLLWVAACGIDLGAMTVFLYAFRVREDLFDCYEAVSGARMHAAYFRPGGVARDLPTQMPQYQKTRFTSKRKAKKLNEPRQGSMLDFLDHFVVDFEKSLDEIDTLLTDNRLWKQRTVDIGTVTAERAKELGFTGPMLRGSGVAWDLRKTQPYEVYHKLEFDIPIGANGDCYDRYLVRMAEMRESNKLIKQCVDWLRANPGPVLSDNHKVAPPKRNAMKNNMEELIHHFKLFSEGYCTTEGEVYVGTEHPKGEFGVYIKSDGANKPYRLKMRAPGFAHISAMDELLSGHMLADTPAIISTIDVVFGDVDR.

The protein belongs to the complex I 49 kDa subunit family. NDH-1 is composed of 14 different subunits. Subunits NuoB, C, D, E, F, and G constitute the peripheral sector of the complex.

It localises to the cell inner membrane. It carries out the reaction a quinone + NADH + 5 H(+)(in) = a quinol + NAD(+) + 4 H(+)(out). Its function is as follows. NDH-1 shuttles electrons from NADH, via FMN and iron-sulfur (Fe-S) centers, to quinones in the respiratory chain. The immediate electron acceptor for the enzyme in this species is believed to be ubiquinone. Couples the redox reaction to proton translocation (for every two electrons transferred, four hydrogen ions are translocated across the cytoplasmic membrane), and thus conserves the redox energy in a proton gradient. This chain is NADH-quinone oxidoreductase subunit D, found in Francisella tularensis subsp. mediasiatica (strain FSC147).